The sequence spans 124 residues: Small ribosomal subunit protein uS12 (124 aa).

At aspartate 89 the chain carries 3-methylthioaspartic acid.

This sequence belongs to the universal ribosomal protein uS12 family. In terms of assembly, part of the 30S ribosomal subunit. Contacts proteins S8 and S17. May interact with IF1 in the 30S initiation complex.

In terms of biological role, with S4 and S5 plays an important role in translational accuracy. Its function is as follows. Interacts with and stabilizes bases of the 16S rRNA that are involved in tRNA selection in the A site and with the mRNA backbone. Located at the interface of the 30S and 50S subunits, it traverses the body of the 30S subunit contacting proteins on the other side and probably holding the rRNA structure together. The combined cluster of proteins S8, S12 and S17 appears to hold together the shoulder and platform of the 30S subunit. In Shewanella frigidimarina (strain NCIMB 400), this protein is Small ribosomal subunit protein uS12.